Reading from the N-terminus, the 277-residue chain is uncharacterized protein (277 aa).

Residues 1–25 form the signal peptide; that stretch reads MNKKSIWSKTAFGSLFLLLGTAFTA. A lipid anchor (N-palmitoyl cysteine) is attached at Cys-26. The S-diacylglycerol cysteine moiety is linked to residue Cys-26.

Belongs to the MG439/MG440 family.

It is found in the cell membrane. This is an uncharacterized protein from Mycoplasma pneumoniae (strain ATCC 29342 / M129 / Subtype 1) (Mycoplasmoides pneumoniae).